The sequence spans 185 residues: Ribosome-recycling factor (185 aa).

It belongs to the RRF family.

The protein resides in the cytoplasm. In terms of biological role, responsible for the release of ribosomes from messenger RNA at the termination of protein biosynthesis. May increase the efficiency of translation by recycling ribosomes from one round of translation to another. The chain is Ribosome-recycling factor from Methylococcus capsulatus (strain ATCC 33009 / NCIMB 11132 / Bath).